The following is a 428-amino-acid chain: Putative zinc metalloprotease SACOL1281 (428 aa).

Residue His21 coordinates Zn(2+). Residue Glu22 is part of the active site. His25 provides a ligand contact to Zn(2+). Transmembrane regions (helical) follow at residues 172-194 (FLTL…IGLA), 309-331 (GSTY…GFSF), 352-374 (IISL…LIPI), and 401-420 (TTII…LVTW). The 84-residue stretch at 186–269 (ALVLFIGLAY…TKSVELTPKK (84 aa)) folds into the PDZ domain.

The protein belongs to the peptidase M50B family. Zn(2+) is required as a cofactor.

The protein localises to the cell membrane. The sequence is that of Putative zinc metalloprotease SACOL1281 from Staphylococcus aureus (strain COL).